We begin with the raw amino-acid sequence, 231 residues long: uncharacterized protein (231 aa).

Residue 10–34 (VVTGAGSGIGEAIATLLHEEGAKVV) participates in NADP(+) binding. Position 140 (serine 140) interacts with substrate. The active-site Proton acceptor is tyrosine 153.

It belongs to the short-chain dehydrogenases/reductases (SDR) family.

This is an uncharacterized protein from Staphylococcus aureus (strain N315).